We begin with the raw amino-acid sequence, 126 residues long: Histone H2B 7 (126 aa).

The segment covering 1–12 (MPEPAKSAPAPK) has biased composition (low complexity). A disordered region spans residues 1–35 (MPEPAKSAPAPKKGSKKAVTKTQKKGDKKRKRARK). N6-acetyllysine is present on residues Lys6 and Lys13. The span at 13–34 (KGSKKAVTKTQKKGDKKRKRAR) shows a compositional bias: basic residues. Ser15 is modified (phosphoserine). N6-acetyllysine is present on residues Lys16 and Lys21. O-linked (GlcNAc) serine glycosylation occurs at Ser113. Residue Lys121 forms a Glycyl lysine isopeptide (Lys-Gly) (interchain with G-Cter in ubiquitin) linkage.

Belongs to the histone H2B family. In terms of assembly, the nucleosome is a histone octamer containing two molecules each of H2A, H2B, H3 and H4 assembled in one H3-H4 heterotetramer and two H2A-H2B heterodimers. The octamer wraps approximately 147 bp of DNA. In terms of processing, monoubiquitination of Lys-121 by the BRE1 gives a specific tag for epigenetic transcriptional activation and is also prerequisite for histone H3 'Lys-4' and 'Lys-79' methylation. Post-translationally, phosphorylated on Ser-15 during apoptosis; which facilitates apoptotic chromatin condensation. GlcNAcylation at Ser-113 promotes monoubiquitination of Lys-121. It fluctuates in response to extracellular glucose, and associates with transcribed genes.

Its subcellular location is the nucleus. It localises to the chromosome. Its function is as follows. Core component of nucleosome. Nucleosomes wrap and compact DNA into chromatin, limiting DNA accessibility to the cellular machineries which require DNA as a template. Histones thereby play a central role in transcription regulation, DNA repair, DNA replication and chromosomal stability. DNA accessibility is regulated via a complex set of post-translational modifications of histones, also called histone code, and nucleosome remodeling. The protein is Histone H2B 7 (H2B-VII) of Gallus gallus (Chicken).